We begin with the raw amino-acid sequence, 466 residues long: Citrate synthase, mitochondrial (466 aa).

The N-terminal 27 residues, 1–27 (MALLTAAARLLGTKNASCLVLAARHAS), are a transit peptide targeting the mitochondrion. The SIFI-degron motif lies at 2-21 (ALLTAAARLLGTKNASCLVL). N6-succinyllysine is present on Lys-57. Position 76 is an N6-acetyllysine; alternate (Lys-76). At Lys-76 the chain carries N6-succinyllysine; alternate. N6-succinyllysine is present on residues Lys-103 and Lys-193. His-301 is an active-site residue. Residues Lys-321 and Lys-327 each carry the N6-acetyllysine; alternate modification. N6-succinyllysine; alternate occurs at positions 321 and 327. The active site involves His-347. Arg-356 is an oxaloacetate binding site. Lys-375 carries the N6-acetyllysine; alternate modification. Residue Lys-375 is modified to N6-succinyllysine; alternate. Lys-382 carries the post-translational modification N6-acetyllysine. Lys-393 carries the post-translational modification N6-acetyllysine; alternate. Lys-393 bears the N6-succinyllysine; alternate mark. Lys-395 carries the post-translational modification N6,N6,N6-trimethyllysine. Asp-402 is a catalytic residue. 2 residues coordinate oxaloacetate: Arg-428 and Arg-448. N6-succinyllysine is present on Lys-450. The residue at position 459 (Lys-459) is an N6-acetyllysine; alternate. At Lys-459 the chain carries N6-succinyllysine; alternate.

It belongs to the citrate synthase family. In terms of assembly, homodimer. Post-translationally, methylated. Trimethylation at Lys-395 by CSKMT decreases citrate synthase activity. In terms of processing, in response to mitochondrial stress, the precursor protein is ubiquitinated by the SIFI complex in the cytoplasm before mitochondrial import, leading to its degradation. Within the SIFI complex, UBR4 initiates ubiquitin chain that are further elongated or branched by KCMF1.

The protein localises to the mitochondrion matrix. The enzyme catalyses oxaloacetate + acetyl-CoA + H2O = citrate + CoA + H(+). It functions in the pathway carbohydrate metabolism; tricarboxylic acid cycle; isocitrate from oxaloacetate: step 1/2. Its function is as follows. Key enzyme of the Krebs tricarboxylic acid cycle which catalyzes the synthesis of citrate from acetyl coenzyme A and oxaloacetate. This chain is Citrate synthase, mitochondrial (CS), found in Homo sapiens (Human).